The sequence spans 398 residues: S-adenosylmethionine synthase (398 aa).

Residue H19 participates in ATP binding. D21 provides a ligand contact to Mg(2+). E47 lines the K(+) pocket. The L-methionine site is built by E60 and Q103. The segment at 103–113 is flexible loop; it reads QSPDIAQGVDV. ATP contacts are provided by residues 177-179, 243-244, D252, 258-259, A275, and K279; these read DGK, RF, and RK. Residue D252 participates in L-methionine binding. K283 contacts L-methionine.

The protein belongs to the AdoMet synthase family. In terms of assembly, homotetramer; dimer of dimers. The cofactor is Mg(2+). K(+) is required as a cofactor.

It is found in the cytoplasm. It catalyses the reaction L-methionine + ATP + H2O = S-adenosyl-L-methionine + phosphate + diphosphate. Its pathway is amino-acid biosynthesis; S-adenosyl-L-methionine biosynthesis; S-adenosyl-L-methionine from L-methionine: step 1/1. Functionally, catalyzes the formation of S-adenosylmethionine (AdoMet) from methionine and ATP. The overall synthetic reaction is composed of two sequential steps, AdoMet formation and the subsequent tripolyphosphate hydrolysis which occurs prior to release of AdoMet from the enzyme. This Symbiobacterium thermophilum (strain DSM 24528 / JCM 14929 / IAM 14863 / T) protein is S-adenosylmethionine synthase.